A 433-amino-acid chain; its full sequence is Glutamate-1-semialdehyde 2,1-aminomutase (433 aa).

Residue lysine 273 is modified to N6-(pyridoxal phosphate)lysine.

Belongs to the class-III pyridoxal-phosphate-dependent aminotransferase family. HemL subfamily. As to quaternary structure, homodimer. Pyridoxal 5'-phosphate is required as a cofactor.

It is found in the cytoplasm. It carries out the reaction (S)-4-amino-5-oxopentanoate = 5-aminolevulinate. Its pathway is porphyrin-containing compound metabolism; protoporphyrin-IX biosynthesis; 5-aminolevulinate from L-glutamyl-tRNA(Glu): step 2/2. It functions in the pathway porphyrin-containing compound metabolism; chlorophyll biosynthesis. The protein is Glutamate-1-semialdehyde 2,1-aminomutase of Crocosphaera subtropica (strain ATCC 51142 / BH68) (Cyanothece sp. (strain ATCC 51142)).